The chain runs to 309 residues: Ribosomal protein L11 methyltransferase (309 aa).

The S-adenosyl-L-methionine site is built by T160, G181, D203, and N245.

This sequence belongs to the methyltransferase superfamily. PrmA family.

It is found in the cytoplasm. It catalyses the reaction L-lysyl-[protein] + 3 S-adenosyl-L-methionine = N(6),N(6),N(6)-trimethyl-L-lysyl-[protein] + 3 S-adenosyl-L-homocysteine + 3 H(+). Its function is as follows. Methylates ribosomal protein L11. The protein is Ribosomal protein L11 methyltransferase of Caldanaerobacter subterraneus subsp. tengcongensis (strain DSM 15242 / JCM 11007 / NBRC 100824 / MB4) (Thermoanaerobacter tengcongensis).